Here is a 681-residue protein sequence, read N- to C-terminus: Transcriptional regulator prz1 (681 aa).

The span at methionine 1–aspartate 15 shows a compositional bias: basic and acidic residues. Disordered regions lie at residues methionine 1–aspartate 29, asparagine 66–proline 96, serine 340–phenylalanine 372, proline 410–leucine 433, and lysine 520–glutamate 563. Polar residues-rich tracts occupy residues asparagine 66–serine 86 and serine 340–glutamate 358. Residues proline 416–leucine 428 show a composition bias toward low complexity. Residues serine 528–glycine 549 show a composition bias toward polar residues. A phosphoserine mark is found at serine 543 and serine 546. Residues asparagine 550 to lysine 559 are compositionally biased toward low complexity. 2 C2H2-type zinc fingers span residues tyrosine 570 to histidine 594 and phenylalanine 600 to histidine 622. Residues phenylalanine 628–glutamate 650 form a C2H2-type 3; degenerate zinc finger. The segment at arginine 662–lysine 681 is disordered.

Belongs to the EGR C2H2-type zinc-finger protein family. Post-translationally, phosphorylated. Dephosphorylated by calcineurin which leads to rapid translocation from the cytoplasm to the nucleus.

Its subcellular location is the nucleus. It localises to the cytoplasm. Functionally, involved in the regulation of calcium ion homeostasis. Binds to the calcineurin-dependent response element. Transcriptionally regulates pmc1. This Schizosaccharomyces pombe (strain 972 / ATCC 24843) (Fission yeast) protein is Transcriptional regulator prz1 (prz1).